Here is a 757-residue protein sequence, read N- to C-terminus: MASHVVGYPRMGPKRELKFALESFWDGKSSAEDLKKVAADLRSSIWKQMADAGIKYIPSNTFAYYDQVLDTTAMLGAVPARYGFNGGEIGFDLYFSMARGNASLPAMEMTKWFDTNYHYIVPELGPEVKFAYSSHKAVDEYKEAKALGVDTVPVLVGPVSYLLLSKAAKGVEKSFPLLSLLPKILPVYKEVIAELKAAGASTIQFDEPTLVMDLESHQLKAFTDAYADLESTLSGLNVLVETYFADLTPEAYKTLVSLNGVTAFGFDLVRGTKTLDLIKSGFPSGKYLFAGVVDGRNIWANDLAASLATLQSLESIVGKDKLVVSTSCSLLHTAVDLVNETKLDDEIKSWLAFAAQKVLEVNALAKALAGQKDEAFFSANAAALASRKSSPRVTNEAVQKAAAGLKGSDHRRATTVSARLDAQQKKLNLPVLPTTTIGSFPQTVELRRVRREYKAKKISEEEYVKAIKEEISKVVKLQEELDIDVLVHGEPERNDMVEYFGEQLSGFAFTVNGWVQSYGSRCVKPPIIYGDVSRPKAMTVFWSSLAQSMTSRPMKGMLTGPVTILNWSFVRNDQPRHETCYQIALAIEDEAEDLEKAGINVIQIDEAALREGLPLRKSGHGFYLQWAVHSFRITNVGIQDTTQIHTHMCYSNFNDIIHSIIDMDADVITIENSRSDEKLLSVFREGVKYGAGIGPGVYDIHSPRIPPTEELADRIRKMLAVLESNVLWVNPDCGLKTRKYNEVNPALSNMVYAAKPI.

5-methyltetrahydropteroyltri-L-glutamate contacts are provided by lysine 18 and asparagine 116. 437–439 contributes to the L-homocysteine binding site; it reads IGS. Residues 437 to 439 and glutamate 490 contribute to the L-methionine site; that span reads IGS. 5-methyltetrahydropteroyltri-L-glutamate contacts are provided by residues 521-522 and tryptophan 567; that span reads RC. Residue aspartate 605 participates in L-homocysteine binding. Residue aspartate 605 participates in L-methionine binding. Positions 647, 649, 658, 662, and 671 each coordinate Zn(2+). The active-site Proton donor is histidine 701. Residue cysteine 733 coordinates Zn(2+).

It belongs to the vitamin-B12 independent methionine synthase family. Zn(2+) is required as a cofactor. As to expression, expressed in pollen (at protein level).

It carries out the reaction 5-methyltetrahydropteroyltri-L-glutamate + L-homocysteine = tetrahydropteroyltri-L-glutamate + L-methionine. Its pathway is amino-acid biosynthesis; L-methionine biosynthesis via de novo pathway; L-methionine from L-homocysteine (MetE route): step 1/1. Its function is as follows. Catalyzes the transfer of a methyl group from 5-methyltetrahydrofolate to homocysteine resulting in methionine formation. In Kali turgidum (Prickly saltwort), this protein is 5-methyltetrahydropteroyltriglutamate--homocysteine methyltransferase.